A 204-amino-acid chain; its full sequence is N-(5'-phosphoribosyl)anthranilate isomerase (204 aa).

This sequence belongs to the TrpF family.

It catalyses the reaction N-(5-phospho-beta-D-ribosyl)anthranilate = 1-(2-carboxyphenylamino)-1-deoxy-D-ribulose 5-phosphate. It functions in the pathway amino-acid biosynthesis; L-tryptophan biosynthesis; L-tryptophan from chorismate: step 3/5. The polypeptide is N-(5'-phosphoribosyl)anthranilate isomerase (Oceanobacillus iheyensis (strain DSM 14371 / CIP 107618 / JCM 11309 / KCTC 3954 / HTE831)).